The primary structure comprises 274 residues: Large ribosomal subunit protein uL2cz/uL2cy (274 aa).

The tract at residues 224–253 (NPIDHPHGGGEGRAPIGRKKPTTPWGYPAL) is disordered.

This sequence belongs to the universal ribosomal protein uL2 family. Part of the 50S ribosomal subunit.

It localises to the plastid. The sequence is that of Large ribosomal subunit protein uL2cz/uL2cy (rpl2-A) from Epifagus virginiana (Beechdrops).